A 1143-amino-acid polypeptide reads, in one-letter code: AP-3 complex subunit delta (1143 aa).

8 HEAT repeats span residues 129 to 166, 167 to 203, 205 to 242, 245 to 279, 280 to 317, 318 to 354, 356 to 389, and 416 to 455; these read DLAR…RYPE, SLRP…RNPK, YLPL…HEPR, KKLI…SDHI, PLMK…IHPK, AVSE…KKNI, DIVF…MGTY, and LIAS…PTEG. Disordered regions lie at residues 520 to 541, 634 to 692, 704 to 728, 741 to 792, and 829 to 899; these read KIPS…DQNE, QEPI…RHPI, KQAN…PENI, HVGA…NDAL, and KKNA…QAAA. Over residues 524-540 the composition is skewed to acidic residues; sequence LDDDDEEEEAQEEEDQN. The stretch at 526–550 forms a coiled coil; the sequence is DDDEEEEAQEEEDQNEITHEIVQEC. Residues 653-662 are compositionally biased toward basic residues; it reads HQKKHHKHHR. Residues 666–675 show a composition bias toward acidic residues; it reads DGDDDEDDET. Residues 814–835 are a coiled coil; it reads TDIIKEKEREMAMLAKKNAKLS. A compositionally biased stretch (polar residues) spans 840–849; sequence PSTANYSEVT. 2 stretches are compositionally biased toward low complexity: residues 854–867 and 881–899; these read APAK…AAGS and KPAA…QAAA. The 103-residue stretch at 914-1016 folds into the GAE domain; the sequence is KTILDDDNFK…FTLLASPSSS (103 aa).

It belongs to the adaptor complexes large subunit family. As to quaternary structure, adaptor protein complex 3 (AP-3) is a heterotetramer composed of two large adaptins (delta-type subunit and beta-type subunit), a medium adaptin (mu-type subunit) and a small adaptin (sigma-type subunit).

The protein localises to the endosome membrane. Its function is as follows. Part of the AP-3 complex, an adaptor-related complex which is essential for the compartmentalization of the endocytic pathway. This Dictyostelium discoideum (Social amoeba) protein is AP-3 complex subunit delta (ap3d1).